We begin with the raw amino-acid sequence, 149 residues long: Histone H2B.3, sperm (149 aa).

Residues 1 to 57 (MPRSPAKTSPRKGSPRKGSPRKGSPSRKASPKRGGKGAKRAGKGGRRRRVVKRRRRR) form a disordered region. 6 short sequence motifs (SPKK motif) span residues 4 to 7 (SPAK), 9 to 12 (SPRK), 14 to 17 (SPRK), 19 to 22 (SPRK), 24 to 27 (SPSR), and 30 to 33 (SPKR). Residues 9–20 (SPRKGSPRKGSP) show a composition bias toward basic residues. Serine 19, serine 24, and serine 30 each carry phosphoserine. The segment covering 29-57 (ASPKRGGKGAKRAGKGGRRRRVVKRRRRR) has biased composition (basic residues). Serine 136 carries O-linked (GlcNAc) serine glycosylation. Lysine 144 is covalently cross-linked (Glycyl lysine isopeptide (Lys-Gly) (interchain with G-Cter in ubiquitin)).

It belongs to the histone H2B family. The nucleosome is a histone octamer containing two molecules each of H2A, H2B, H3 and H4 assembled in one H3-H4 heterotetramer and two H2A-H2B heterodimers. The octamer wraps approximately 147 bp of DNA. In terms of processing, monoubiquitination of Lys-144 gives a specific tag for epigenetic transcriptional activation and is also prerequisite for histone H3 'Lys-4' and 'Lys-79' methylation. Phosphorylated on SPKK motifs 4, 5 and 6; which may regulate DNA binding. Dephosphorylated during maturation of spermatids to mature sperm and rephosphorylated at fertilization. Post-translationally, glcNAcylation at Ser-136 promotes monoubiquitination of Lys-144. It fluctuates in response to extracellular glucose, and associates with transcribed genes.

The protein resides in the nucleus. Its subcellular location is the chromosome. Its function is as follows. Core component of nucleosome. Nucleosomes wrap and compact DNA into chromatin, limiting DNA accessibility to the cellular machineries which require DNA as a template. Histones thereby play a central role in transcription regulation, DNA repair, DNA replication and chromosomal stability. DNA accessibility is regulated via a complex set of post-translational modifications of histones, also called histone code, and nucleosome remodeling. In Parechinus angulosus (Angulate sea urchin), this protein is Histone H2B.3, sperm.